A 188-amino-acid chain; its full sequence is Elongation factor P (188 aa).

It belongs to the elongation factor P family.

It localises to the cytoplasm. It participates in protein biosynthesis; polypeptide chain elongation. Involved in peptide bond synthesis. Stimulates efficient translation and peptide-bond synthesis on native or reconstituted 70S ribosomes in vitro. Probably functions indirectly by altering the affinity of the ribosome for aminoacyl-tRNA, thus increasing their reactivity as acceptors for peptidyl transferase. The sequence is that of Elongation factor P from Chlorobaculum parvum (strain DSM 263 / NCIMB 8327) (Chlorobium vibrioforme subsp. thiosulfatophilum).